The primary structure comprises 420 residues: D-inositol 3-phosphate glycosyltransferase (420 aa).

Histidine 13 contacts 1D-myo-inositol 3-phosphate. Residues 19-20 (QP) and glycine 27 contribute to the UDP-N-acetyl-alpha-D-glucosamine site. Residues 24–29 (DAGGMN), lysine 82, tyrosine 115, threonine 139, and arginine 159 each bind 1D-myo-inositol 3-phosphate. UDP-N-acetyl-alpha-D-glucosamine is bound by residues arginine 233, lysine 238, and valine 294. The Mg(2+) site is built by phenylalanine 303, arginine 304, and alanine 306. 2 residues coordinate UDP-N-acetyl-alpha-D-glucosamine: glutamate 316 and glutamate 324. Threonine 330 contributes to the Mg(2+) binding site.

It belongs to the glycosyltransferase group 1 family. MshA subfamily. Homodimer.

It carries out the reaction 1D-myo-inositol 3-phosphate + UDP-N-acetyl-alpha-D-glucosamine = 1D-myo-inositol 2-acetamido-2-deoxy-alpha-D-glucopyranoside 3-phosphate + UDP + H(+). Catalyzes the transfer of a N-acetyl-glucosamine moiety to 1D-myo-inositol 3-phosphate to produce 1D-myo-inositol 2-acetamido-2-deoxy-glucopyranoside 3-phosphate in the mycothiol biosynthesis pathway. This Pseudarthrobacter chlorophenolicus (strain ATCC 700700 / DSM 12829 / CIP 107037 / JCM 12360 / KCTC 9906 / NCIMB 13794 / A6) (Arthrobacter chlorophenolicus) protein is D-inositol 3-phosphate glycosyltransferase.